Here is a 345-residue protein sequence, read N- to C-terminus: Phosphate import ATP-binding protein PstB 2 (345 aa).

A disordered region spans residues 1 to 57 (MSDTPQSEPRRSDDRSGADDATAAAAGSTDAAAAAVSSKTGGIAGPPGGPGEVDGDE). The segment covering 8–18 (EPRRSDDRSGA) has biased composition (basic and acidic residues). A compositionally biased stretch (low complexity) spans 19 to 35 (DDATAAAAGSTDAAAAA). The segment covering 42-52 (GIAGPPGGPGE) has biased composition (gly residues). Residues 86 to 340 (VSVSDLDTYY…PQSQRVEDYV (255 aa)) form the ABC transporter domain. ATP is bound at residue 118 to 125 (GPSGCGKS).

This sequence belongs to the ABC transporter superfamily. Phosphate importer (TC 3.A.1.7) family. The complex is composed of two ATP-binding proteins (PstB), two transmembrane proteins (PstC and PstA) and a solute-binding protein (PstS).

The protein resides in the cell membrane. The catalysed reaction is phosphate(out) + ATP + H2O = ADP + 2 phosphate(in) + H(+). In terms of biological role, part of the ABC transporter complex PstSACB involved in phosphate import. Responsible for energy coupling to the transport system. The polypeptide is Phosphate import ATP-binding protein PstB 2 (Halobacterium salinarum (strain ATCC 700922 / JCM 11081 / NRC-1) (Halobacterium halobium)).